A 110-amino-acid polypeptide reads, in one-letter code: Inner kinetochore subunit mhf1 (110 aa).

The protein belongs to the TAF9 family. CENP-S/MHF1 subfamily. The MHF histone-fold complex is a heterotetramer of 2 mhf1-mhf2 heterodimers. Component of the inner kinetochore constitutive centromere-associated network (CCAN) (also known as central kinetochore Sim4 complex in fission yeast), which is composed of at least cnl2, cnp3, cnp20, fta1, fta2, fta3, fta4, fta6, fta7, mal2, mhf1, mhf2, mis6, mis15, mis17, sim4 and wip1.

It is found in the nucleus. Component of a FANCM-MHF complex that promotes gene conversion at blocked replication forks, probably by reversal of the stalled fork. FANCM-MHF promotes non-crossover recombination. This is Inner kinetochore subunit mhf1 from Schizosaccharomyces pombe (strain 972 / ATCC 24843) (Fission yeast).